A 143-amino-acid chain; its full sequence is Hemoglobin subunit alpha-2 (143 aa).

An N-acetylserine modification is found at Ser-2. Positions 2–143 constitute a Globin domain; sequence SLSTKDKDTV…LARALSEKYR (142 aa). 2 residues coordinate heme b: His-60 and His-89.

Belongs to the globin family. As to quaternary structure, hb 2 is a heterotetramer of two alpha-2 and two beta chains. In terms of tissue distribution, red blood cells.

Functionally, involved in oxygen transport from gills to the various peripheral tissues. The chain is Hemoglobin subunit alpha-2 from Cottoperca gobio (Frogmouth).